The primary structure comprises 196 residues: Ribosome maturation factor RimP (196 aa).

The interval E176–Q196 is disordered. Positions T177 to Q196 are enriched in acidic residues.

The protein belongs to the RimP family.

The protein localises to the cytoplasm. Required for maturation of 30S ribosomal subunits. The chain is Ribosome maturation factor RimP from Roseobacter denitrificans (strain ATCC 33942 / OCh 114) (Erythrobacter sp. (strain OCh 114)).